Reading from the N-terminus, the 363-residue chain is Actin-related protein 7 (363 aa).

Met-1 is subject to N-acetylmethionine.

This sequence belongs to the actin family. Plant ARP7 subfamily. In terms of tissue distribution, mostly expressed in flowers, and, to a lower extent, in roots, seedlings, leaves and siliques (at protein level).

It is found in the nucleus. The protein localises to the cytoplasm. Functionally, essential protein required during embryogenesis and all plant development stages, probably through a chromatin-mediated regulation of gene expression. The protein is Actin-related protein 7 (ARP7) of Arabidopsis thaliana (Mouse-ear cress).